The sequence spans 202 residues: Peptidyl-tRNA hydrolase (202 aa).

Residue Tyr14 coordinates tRNA. Catalysis depends on His19, which acts as the Proton acceptor. Residues Phe64, Asn66, and Asn112 each contribute to the tRNA site.

The protein belongs to the PTH family. Monomer.

It localises to the cytoplasm. It catalyses the reaction an N-acyl-L-alpha-aminoacyl-tRNA + H2O = an N-acyl-L-amino acid + a tRNA + H(+). Its function is as follows. Hydrolyzes ribosome-free peptidyl-tRNAs (with 1 or more amino acids incorporated), which drop off the ribosome during protein synthesis, or as a result of ribosome stalling. Functionally, catalyzes the release of premature peptidyl moieties from peptidyl-tRNA molecules trapped in stalled 50S ribosomal subunits, and thus maintains levels of free tRNAs and 50S ribosomes. The chain is Peptidyl-tRNA hydrolase from Methylobacterium radiotolerans (strain ATCC 27329 / DSM 1819 / JCM 2831 / NBRC 15690 / NCIMB 10815 / 0-1).